We begin with the raw amino-acid sequence, 80 residues long: Acyl carrier protein (80 aa).

The Carrier domain maps to 2 to 77 (SDTLKRLQKI…DALNYIENKI (76 aa)). Position 37 is an O-(pantetheine 4'-phosphoryl)serine (Ser37).

It belongs to the acyl carrier protein (ACP) family. 4'-phosphopantetheine is transferred from CoA to a specific serine of apo-ACP by AcpS. This modification is essential for activity because fatty acids are bound in thioester linkage to the sulfhydryl of the prosthetic group.

Its subcellular location is the plastid. It is found in the chloroplast. It participates in lipid metabolism; fatty acid biosynthesis. Carrier of the growing fatty acid chain in fatty acid biosynthesis. The protein is Acyl carrier protein of Cylindrotheca sp. (strain N1) (Marine diatom).